The sequence spans 373 residues: 3-dehydroquinate synthase (373 aa).

Residues 107-111 (GVIGD), 131-132 (TS), Lys-144, and Lys-153 each bind NAD(+). Zn(2+) is bound by residues Glu-186, His-249, and His-267.

The protein belongs to the sugar phosphate cyclases superfamily. Dehydroquinate synthase family. Co(2+) is required as a cofactor. Requires Zn(2+) as cofactor. NAD(+) serves as cofactor.

The protein localises to the cytoplasm. It carries out the reaction 7-phospho-2-dehydro-3-deoxy-D-arabino-heptonate = 3-dehydroquinate + phosphate. The protein operates within metabolic intermediate biosynthesis; chorismate biosynthesis; chorismate from D-erythrose 4-phosphate and phosphoenolpyruvate: step 2/7. In terms of biological role, catalyzes the conversion of 3-deoxy-D-arabino-heptulosonate 7-phosphate (DAHP) to dehydroquinate (DHQ). The chain is 3-dehydroquinate synthase from Ruegeria sp. (strain TM1040) (Silicibacter sp.).